The following is a 553-amino-acid chain: ATP synthase F(1) complex subunit alpha, mitochondrial (553 aa).

A mitochondrion-targeting transit peptide spans 1-43 (MLSVRVAAAVARALPRRAGLVSKNALGSSFVAARNLHASNTRL). A phosphoserine mark is found at Ser53 and Ser65. The residue at position 76 (Ser76) is a Phosphoserine; alternate. O-linked (GlcNAc) serine; alternate glycosylation occurs at Ser76. The residue at position 106 (Ser106) is a Phosphoserine. N6-acetyllysine occurs at positions 123, 126, and 132. A Phosphothreonine modification is found at Thr134. Lys161 is subject to N6-acetyllysine; alternate. Lys161 is modified (N6-succinyllysine; alternate). Phosphoserine is present on Ser166. Lys167 carries the N6-acetyllysine; alternate modification. At Lys167 the chain carries N6-succinyllysine; alternate. Ser184 is subject to Phosphoserine. Arg204 carries the post-translational modification Omega-N-methylarginine. 5 residues coordinate ATP: Gln215, Gly217, Lys218, Thr219, and Ser220. Residue Thr219 participates in Mg(2+) binding. Residues Lys230 and Lys239 each carry the N6-acetyllysine; alternate modification. N6-succinyllysine; alternate occurs at positions 230 and 239. Lys240 carries the post-translational modification N6-acetyllysine. Lys261 and Lys305 each carry N6-acetyllysine; alternate. Lys261 and Lys305 each carry N6-succinyllysine; alternate. Residue Asp312 participates in Mg(2+) binding. An N6-acetyllysine; alternate modification is found at Lys427. An N6-succinyllysine; alternate modification is found at Lys427. Residue Lys434 is modified to N6-acetyllysine. ATP contacts are provided by Gln473 and Gln475. 4 positions are modified to N6-acetyllysine; alternate: Lys498, Lys506, Lys531, and Lys539. Residues Lys498, Lys506, Lys531, and Lys539 each carry the N6-succinyllysine; alternate modification. Lys541 carries the N6-acetyllysine modification.

Belongs to the ATPase alpha/beta chains family. Homotrimer. Component of the ATP synthase complex composed at least of ATP5F1A/subunit alpha, ATP5F1B/subunit beta, ATP5MC1/subunit c (homooctomer), MT-ATP6/subunit a, MT-ATP8/subunit 8, ATP5ME/subunit e, ATP5MF/subunit f, ATP5MG/subunit g, ATP5MK/subunit k, ATP5MJ/subunit j, ATP5F1C/subunit gamma, ATP5F1D/subunit delta, ATP5F1E/subunit epsilon, ATP5PF/subunit F6, ATP5PB/subunit b, ATP5PD/subunit d, ATP5PO/subunit OSCP. ATP synthase complex consists of a soluble F(1) head domain (subunits alpha(3) and beta(3)) - the catalytic core - and a membrane F(0) domain - the membrane proton channel (subunits c, a, 8, e, f, g, k and j). These two domains are linked by a central stalk (subunits gamma, delta, and epsilon) rotating inside the F1 region and a stationary peripheral stalk (subunits F6, b, d, and OSCP). Interacts with ATPAF2. Interacts with HRG; the interaction occurs on the surface of T-cells and alters the cell morphology when associated with concanavalin (in vitro). Interacts with PLG (angiostatin peptide); the interaction inhibits most of the angiogenic properties of angiostatin. Interacts with BLOC1S1. Interacts with BCL2L1 isoform BCL-X(L); the interaction mediates the association of BCL2L1 isoform BCL-X(L) with the mitochondrial membrane F(1)F(0) ATP synthase and enhances neurons metabolic efficiency. Interacts with CLN5 and PPT1. Interacts with S100A1; this interaction increases F1-ATPase activity. Interacts with ABCB7; this interaction allows the regulation of cellular iron homeostasis and cellular reactive oxygen species (ROS) levels in cardiomyocytes. Acetylated on lysine residues. BLOC1S1 is required for acetylation. Expressed in heart (at protein level).

The protein resides in the mitochondrion. The protein localises to the mitochondrion inner membrane. It is found in the cell membrane. Functionally, subunit alpha, of the mitochondrial membrane ATP synthase complex (F(1)F(0) ATP synthase or Complex V) that produces ATP from ADP in the presence of a proton gradient across the membrane which is generated by electron transport complexes of the respiratory chain. ATP synthase complex consist of a soluble F(1) head domain - the catalytic core - and a membrane F(1) domain - the membrane proton channel. These two domains are linked by a central stalk rotating inside the F(1) region and a stationary peripheral stalk. During catalysis, ATP synthesis in the catalytic domain of F(1) is coupled via a rotary mechanism of the central stalk subunits to proton translocation. In vivo, can only synthesize ATP although its ATP hydrolase activity can be activated artificially in vitro. With the catalytic subunit beta (ATP5F1B), forms the catalytic core in the F(1) domain. Subunit alpha does not bear the catalytic high-affinity ATP-binding sites. The sequence is that of ATP synthase F(1) complex subunit alpha, mitochondrial from Sus scrofa (Pig).